A 154-amino-acid polypeptide reads, in one-letter code: Protein aau3 (154 aa).

An HTH rrf2-type domain is found at 2-132 (RLTKQTNYAV…QGYTIDDLVK (131 aa)). The [2Fe-2S] cluster site is built by Cys91, Cys99, and Cys105.

[2Fe-2S] cluster is required as a cofactor.

Functionally, required for growth utilizing PHB cycle intermediates. The polypeptide is Protein aau3 (aau3) (Rhizobium meliloti (strain 1021) (Ensifer meliloti)).